A 310-amino-acid polypeptide reads, in one-letter code: N-acetyl-gamma-glutamyl-phosphate reductase (310 aa).

Cys-117 is an active-site residue.

The protein belongs to the NAGSA dehydrogenase family. Type 2 subfamily.

It localises to the cytoplasm. The enzyme catalyses N-acetyl-L-glutamate 5-semialdehyde + phosphate + NADP(+) = N-acetyl-L-glutamyl 5-phosphate + NADPH + H(+). It participates in amino-acid biosynthesis; L-arginine biosynthesis; N(2)-acetyl-L-ornithine from L-glutamate: step 3/4. Functionally, catalyzes the NADPH-dependent reduction of N-acetyl-5-glutamyl phosphate to yield N-acetyl-L-glutamate 5-semialdehyde. This chain is N-acetyl-gamma-glutamyl-phosphate reductase, found in Rhizobium rhizogenes (strain K84 / ATCC BAA-868) (Agrobacterium radiobacter).